Reading from the N-terminus, the 294-residue chain is Homeobox-leucine zipper protein ATHB-16 (294 aa).

A compositionally biased stretch (polar residues) spans 1 to 20 (MKRLSSSDSMCGLISTSTDE). The interval 1 to 31 (MKRLSSSDSMCGLISTSTDEQSPRGYGSNYQ) is disordered. A DNA-binding region (homeobox) is located at residues 56-115 (LSEKKRRLKVDQVKALEKNFELENKLEPERKTKLAQELGLQPRQVAVWFQNRRARWKTKQ). Positions 116–151 (LEKDYGVLKGQYDSLRHNFDSLRRDNDSLLQEISKI) are leucine-zipper. A compositionally biased stretch (polar residues) spans 219–238 (SSDSCDSSAVLNDETSSDNG). A disordered region spans residues 219-241 (SSDSCDSSAVLNDETSSDNGRLT).

This sequence belongs to the HD-ZIP homeobox family. Class I subfamily. In terms of tissue distribution, widely expressed with a lower level in siliques.

The protein resides in the nucleus. In terms of biological role, probable transcription factor that may function as a negative regulator of the flowering time response to photoperiod. May act to repress cell expansion during plant development. In Arabidopsis thaliana (Mouse-ear cress), this protein is Homeobox-leucine zipper protein ATHB-16 (ATHB-16).